Consider the following 1060-residue polypeptide: CCR4-NOT transcriptional complex subunit CAF120 (1060 aa).

One can recognise a PH domain in the interval 75-204 (RRYHEGVFLI…WNSAIRLCLY (130 aa)). A compositionally biased stretch (low complexity) spans 465-481 (KLSYGSKSSSNNSSKNS). 3 disordered regions span residues 465 to 589 (KLSY…TSCG), 801 to 942 (EHRS…NMQA), and 955 to 1060 (QQPN…PYAQ). Over residues 490–504 (LSSSSEQDLNNSDSP) the composition is skewed to polar residues. Phosphoserine occurs at positions 491, 510, 518, 538, and 556. 2 stretches are compositionally biased toward basic and acidic residues: residues 571-589 (NDRK…TSCG) and 801-814 (EHRS…RSPE). A compositionally biased stretch (polar residues) spans 845–883 (SITPQRGQPVPSGQQISSYVQPANINSPNKMYGANNSAM). Phosphoserine is present on residues serine 871 and serine 885. Polar residues-rich tracts occupy residues 900 to 923 (QGWN…TQPQ), 931 to 942 (PYSTGNRPNMQA), and 1048 to 1060 (FMPS…PYAQ).

It belongs to the CAF120 family. Subunit of the 1.0 MDa CCR4-NOT core complex that contains CCR4, CAF1, CAF120, NOT1, NOT2, NOT3, NOT4, NOT5, CAF40 and CAF130. In the complex interacts with NOT1. The core complex probably is part of a less characterized 1.9 MDa CCR4-NOT complex.

It localises to the cytoplasm. It is found in the nucleus. The protein resides in the bud neck. Acts as a component of the CCR4-NOT core complex, which in the nucleus seems to be a general transcription factor, and in the cytoplasm the major mRNA deadenylase involved in mRNA turnover. The NOT protein subcomplex negatively regulates the basal and activated transcription of many genes. Preferentially affects TC-type TATA element-dependent transcription. Could directly or indirectly inhibit component(s) of the general transcription machinery. This is CCR4-NOT transcriptional complex subunit CAF120 (CAF120) from Saccharomyces cerevisiae (strain ATCC 204508 / S288c) (Baker's yeast).